A 79-amino-acid polypeptide reads, in one-letter code: MSRLGIMVLTLLLLVFIVTSHQDAGEKQATQRNAINFRWRRSFTRRAATEECEEYCEDEEKTCCGLEDGEPVCATTCLG.

Positions M1–S20 are cleaved as a signal peptide. Positions H21–T44 are excised as a propeptide. 3 disulfide bridges follow: C52–C64, C56–C73, and C63–C77. At L78 the chain carries Leucine amide.

Belongs to the conotoxin O3 superfamily. In terms of tissue distribution, expressed by the venom duct.

The protein localises to the secreted. This is Conotoxin ArMSGL-0121 from Conus arenatus (Sand-dusted cone).